The following is a 294-amino-acid chain: tRNA dimethylallyltransferase (294 aa).

Residue 10–17 (GPTAVGKT) participates in ATP binding. Residue 12-17 (TAVGKT) coordinates substrate. The interaction with substrate tRNA stretch occupies residues 35 to 38 (DSQQ).

This sequence belongs to the IPP transferase family. Monomer. Mg(2+) is required as a cofactor.

The enzyme catalyses adenosine(37) in tRNA + dimethylallyl diphosphate = N(6)-dimethylallyladenosine(37) in tRNA + diphosphate. Its function is as follows. Catalyzes the transfer of a dimethylallyl group onto the adenine at position 37 in tRNAs that read codons beginning with uridine, leading to the formation of N6-(dimethylallyl)adenosine (i(6)A). This Streptococcus pneumoniae serotype 2 (strain D39 / NCTC 7466) protein is tRNA dimethylallyltransferase.